A 253-amino-acid polypeptide reads, in one-letter code: Triosephosphate isomerase (253 aa).

N9–K11 is a binding site for substrate. H96 functions as the Electrophile in the catalytic mechanism. The active-site Proton acceptor is E168. Substrate is bound by residues G174, S213, and G234–G235.

The protein belongs to the triosephosphate isomerase family. As to quaternary structure, homodimer.

The protein localises to the cytoplasm. The enzyme catalyses D-glyceraldehyde 3-phosphate = dihydroxyacetone phosphate. Its pathway is carbohydrate biosynthesis; gluconeogenesis. It participates in carbohydrate degradation; glycolysis; D-glyceraldehyde 3-phosphate from glycerone phosphate: step 1/1. In terms of biological role, involved in the gluconeogenesis. Catalyzes stereospecifically the conversion of dihydroxyacetone phosphate (DHAP) to D-glyceraldehyde-3-phosphate (G3P). The chain is Triosephosphate isomerase from Hydrogenovibrio crunogenus (strain DSM 25203 / XCL-2) (Thiomicrospira crunogena).